A 520-amino-acid polypeptide reads, in one-letter code: Dynein axonemal assembly factor 8 (520 aa).

Disordered stretches follow at residues 93 to 202, 217 to 256, 328 to 366, and 388 to 520; these read PVLV…LRQE, RDAC…EGPP, CARK…QLAQ, and DHLS…LEQL. The segment covering 111–125 has biased composition (basic and acidic residues); that stretch reads RTKDASSQEGRDPGR. Residue serine 161 is modified to Phosphoserine. Serine 351 carries the post-translational modification Phosphoserine. Residues 401 to 410 are compositionally biased toward acidic residues; that stretch reads DSEEEEEEEM. Positions 420–437 are enriched in polar residues; the sequence is SPSSLGLRTCTGKSQLLQ.

As to expression, expressed in respiratory ciliated cells (at protein level).

It is found in the dynein axonemal particle. It localises to the cytoplasm. In terms of biological role, in cyliated cells, dynein axonemal particle-specific protein required for deployment of ODA to the axoneme. Interacts with outer dynein arm (ODA) subunits. The chain is Dynein axonemal assembly factor 8 from Homo sapiens (Human).